Reading from the N-terminus, the 134-residue chain is Phosphoribosyl-AMP cyclohydrolase (134 aa).

D80 contributes to the Mg(2+) binding site. C81 provides a ligand contact to Zn(2+). Positions 82 and 84 each coordinate Mg(2+). C98 and C105 together coordinate Zn(2+).

This sequence belongs to the PRA-CH family. Homodimer. The cofactor is Mg(2+). Zn(2+) serves as cofactor.

Its subcellular location is the cytoplasm. It carries out the reaction 1-(5-phospho-beta-D-ribosyl)-5'-AMP + H2O = 1-(5-phospho-beta-D-ribosyl)-5-[(5-phospho-beta-D-ribosylamino)methylideneamino]imidazole-4-carboxamide. It participates in amino-acid biosynthesis; L-histidine biosynthesis; L-histidine from 5-phospho-alpha-D-ribose 1-diphosphate: step 3/9. Catalyzes the hydrolysis of the adenine ring of phosphoribosyl-AMP. This Bordetella pertussis (strain Tohama I / ATCC BAA-589 / NCTC 13251) protein is Phosphoribosyl-AMP cyclohydrolase.